Reading from the N-terminus, the 433-residue chain is Enolase (433 aa).

(2R)-2-phosphoglycerate is bound at residue Gln-167. Glu-209 functions as the Proton donor in the catalytic mechanism. Asp-246, Glu-291, and Asp-318 together coordinate Mg(2+). Residues Lys-343, Arg-372, Ser-373, and Lys-394 each coordinate (2R)-2-phosphoglycerate. Lys-343 (proton acceptor) is an active-site residue.

It belongs to the enolase family. Component of the RNA degradosome, a multiprotein complex involved in RNA processing and mRNA degradation. Mg(2+) serves as cofactor.

It is found in the cytoplasm. Its subcellular location is the secreted. It localises to the cell surface. The enzyme catalyses (2R)-2-phosphoglycerate = phosphoenolpyruvate + H2O. It participates in carbohydrate degradation; glycolysis; pyruvate from D-glyceraldehyde 3-phosphate: step 4/5. Functionally, catalyzes the reversible conversion of 2-phosphoglycerate (2-PG) into phosphoenolpyruvate (PEP). It is essential for the degradation of carbohydrates via glycolysis. In Actinobacillus succinogenes (strain ATCC 55618 / DSM 22257 / CCUG 43843 / 130Z), this protein is Enolase.